The primary structure comprises 227 residues: Ribosomal RNA large subunit methyltransferase E (227 aa).

5 residues coordinate S-adenosyl-L-methionine: G78, W80, D103, D119, and D143. The active-site Proton acceptor is the K183.

The protein belongs to the class I-like SAM-binding methyltransferase superfamily. RNA methyltransferase RlmE family.

It localises to the cytoplasm. The enzyme catalyses uridine(2552) in 23S rRNA + S-adenosyl-L-methionine = 2'-O-methyluridine(2552) in 23S rRNA + S-adenosyl-L-homocysteine + H(+). In terms of biological role, specifically methylates the uridine in position 2552 of 23S rRNA at the 2'-O position of the ribose in the fully assembled 50S ribosomal subunit. The protein is Ribosomal RNA large subunit methyltransferase E of Rickettsia conorii (strain ATCC VR-613 / Malish 7).